The chain runs to 700 residues: Elongation factor G (700 aa).

Positions 8-290 (ERYRNIGISA…GVIDFMPSPI (283 aa)) constitute a tr-type G domain. GTP is bound by residues 17–24 (AHIDAGKT), 88–92 (DTPGH), and 142–145 (NKMD).

The protein belongs to the TRAFAC class translation factor GTPase superfamily. Classic translation factor GTPase family. EF-G/EF-2 subfamily.

The protein resides in the cytoplasm. In terms of biological role, catalyzes the GTP-dependent ribosomal translocation step during translation elongation. During this step, the ribosome changes from the pre-translocational (PRE) to the post-translocational (POST) state as the newly formed A-site-bound peptidyl-tRNA and P-site-bound deacylated tRNA move to the P and E sites, respectively. Catalyzes the coordinated movement of the two tRNA molecules, the mRNA and conformational changes in the ribosome. The sequence is that of Elongation factor G from Methylibium petroleiphilum (strain ATCC BAA-1232 / LMG 22953 / PM1).